Reading from the N-terminus, the 427-residue chain is MFIDKAKIHLKSGKGGDGAVAFRKEKYVPAGGPAGGDGGKGGNIIFVVDEGMRTLMDFRYKMHYSAENGENGKGRMQYGKDGEDLILRVPPGTIIREEKTGHLVADLTQPKERRIIAKGGKGGKGNVHFKSATRQAPQFAIAGVKGEELTVTLELKLIADVGLVGFPNVGKSTLLSVVTSAKPKIADYHFTTLTPNLGVVRTKRGDSFVLADIPGLIEGAHEGTGLGHEFLRHVERTKLLIHVLDVAGIEGRDPLEDFEKINEELKLYNEKLSTRPQVVAANKTDVMGENENLKKLTEALAEKGIEVFPVSAATKQGLDELLDYVSIKLKELEDTEVELEEVEEEKLYELKEKDTNQFTVKKEDDTYIVEGDFLERLIMSTNFEDMDSLTYFQKVLRRKGIIDELKKLGIEDGEFVKIYDVEFEYFH.

Positions 1 to 158 (MFIDKAKIHL…LTVTLELKLI (158 aa)) constitute an Obg domain. The OBG-type G domain maps to 159-330 (ADVGLVGFPN…LLDYVSIKLK (172 aa)). GTP-binding positions include 165–172 (GFPNVGKS), 190–194 (FTTLT), 212–215 (DIPG), 282–285 (NKTD), and 311–313 (SAA). Positions 172 and 192 each coordinate Mg(2+). One can recognise an OCT domain in the interval 347–427 (LYELKEKDTN…IYDVEFEYFH (81 aa)).

It belongs to the TRAFAC class OBG-HflX-like GTPase superfamily. OBG GTPase family. As to quaternary structure, monomer. The cofactor is Mg(2+).

Its subcellular location is the cytoplasm. In terms of biological role, an essential GTPase which binds GTP, GDP and possibly (p)ppGpp with moderate affinity, with high nucleotide exchange rates and a fairly low GTP hydrolysis rate. Plays a role in control of the cell cycle, stress response, ribosome biogenesis and in those bacteria that undergo differentiation, in morphogenesis control. This chain is GTPase Obg, found in Alkaliphilus metalliredigens (strain QYMF).